Reading from the N-terminus, the 60-residue chain is Large ribosomal subunit protein bL32 (60 aa).

Residues 1 to 60 (MAVQQNKKSPSKRGMHRSHDFLVNPPTAIEPTTGESHLRHHISPNGFYRGRKILKTKADE) are disordered. Basic residues predominate over residues 49 to 60 (RGRKILKTKADE).

Belongs to the bacterial ribosomal protein bL32 family.

The sequence is that of Large ribosomal subunit protein bL32 from Bordetella avium (strain 197N).